A 397-amino-acid polypeptide reads, in one-letter code: Cysteine desulfurase (397 aa).

Pyridoxal 5'-phosphate-binding positions include N148, Q176, and 196–198; that span reads SAH. K199 is subject to N6-(pyridoxal phosphate)lysine. T234 contacts pyridoxal 5'-phosphate. The Cysteine persulfide intermediate role is filled by C321. [2Fe-2S] cluster is bound at residue C321.

Belongs to the class-V pyridoxal-phosphate-dependent aminotransferase family. NifS/IscS subfamily. In terms of assembly, homodimer. It depends on pyridoxal 5'-phosphate as a cofactor.

The enzyme catalyses (sulfur carrier)-H + L-cysteine = (sulfur carrier)-SH + L-alanine. Catalyzes the removal of elemental sulfur atoms from cysteine to produce alanine. Seems to participate in the biosynthesis of the nitrogenase metalloclusters by providing the inorganic sulfur required for the Fe-S core formation. This chain is Cysteine desulfurase, found in Klebsiella pneumoniae.